The primary structure comprises 297 residues: Alpha-tubulin N-acetyltransferase 1 (297 aa).

An N-acetyltransferase domain is found at 1-186; the sequence is MEFDFDVHKI…NNFVVFDGFF (186 aa). Acetyl-CoA is bound by residues 120-133 and 156-165; these read FYIH…GFGK and SEKFLSFLRK. The segment at 269–297 is disordered; sequence LHRTANSEQEDHSQRRRTSSLNRPQSIHH. A compositionally biased stretch (polar residues) spans 287-297; sequence SSLNRPQSIHH.

It belongs to the acetyltransferase ATAT1 family.

The protein resides in the cytoplasm. The protein localises to the membrane. It is found in the clathrin-coated pit. Its subcellular location is the cell junction. It localises to the focal adhesion. The protein resides in the cell projection. The protein localises to the axon. It is found in the cytoskeleton. Its subcellular location is the spindle. It catalyses the reaction L-lysyl-[alpha-tubulin] + acetyl-CoA = N(6)-acetyl-L-lysyl-[alpha-tubulin] + CoA + H(+). Its function is as follows. Specifically acetylates 'Lys-40' in alpha-tubulin on the lumenal side of microtubules. Promotes microtubule destabilization and accelerates microtubule dynamics; this activity may be independent of acetylation activity. Acetylates alpha-tubulin with a slow enzymatic rate, due to a catalytic site that is not optimized for acetyl transfer. Enters the microtubule through each end and diffuses quickly throughout the lumen of microtubules. Acetylates only long/old microtubules because of its slow acetylation rate since it does not have time to act on dynamically unstable microtubules before the enzyme is released. May be involved in neuron development. The polypeptide is Alpha-tubulin N-acetyltransferase 1 (Xenopus tropicalis (Western clawed frog)).